The following is a 284-amino-acid chain: Pantothenate synthetase (284 aa).

An ATP-binding site is contributed by 30-37 (MGNLHDGH). H37 functions as the Proton donor in the catalytic mechanism. Residue Q61 participates in (R)-pantoate binding. Q61 contacts beta-alanine. 149–152 (GEKD) contacts ATP. Q155 contributes to the (R)-pantoate binding site. ATP is bound by residues V178 and 186-189 (LSSR).

The protein belongs to the pantothenate synthetase family. As to quaternary structure, homodimer.

The protein resides in the cytoplasm. It catalyses the reaction (R)-pantoate + beta-alanine + ATP = (R)-pantothenate + AMP + diphosphate + H(+). The protein operates within cofactor biosynthesis; (R)-pantothenate biosynthesis; (R)-pantothenate from (R)-pantoate and beta-alanine: step 1/1. Catalyzes the condensation of pantoate with beta-alanine in an ATP-dependent reaction via a pantoyl-adenylate intermediate. This is Pantothenate synthetase from Photorhabdus laumondii subsp. laumondii (strain DSM 15139 / CIP 105565 / TT01) (Photorhabdus luminescens subsp. laumondii).